The primary structure comprises 112 residues: MTVLSDMKCEACQADAPKVTDEELAELVRMIPDWSVQVRDGIMQLERVYKFKNFKLAMAFTNKLAELAEEEFHHPGIFTEWGKVTVTWWSHSIKGLHRNDFIMAAKTDQLLG.

It belongs to the pterin-4-alpha-carbinolamine dehydratase family.

It catalyses the reaction (4aS,6R)-4a-hydroxy-L-erythro-5,6,7,8-tetrahydrobiopterin = (6R)-L-erythro-6,7-dihydrobiopterin + H2O. This Shewanella putrefaciens (strain CN-32 / ATCC BAA-453) protein is Putative pterin-4-alpha-carbinolamine dehydratase.